Reading from the N-terminus, the 314-residue chain is Lipoyl synthase (314 aa).

Positions 55, 60, 66, 81, 85, 88, and 292 each coordinate [4Fe-4S] cluster. The Radical SAM core domain occupies 67-281; the sequence is WEDREATFLI…SAYAEGLGFA (215 aa).

The protein belongs to the radical SAM superfamily. Lipoyl synthase family. [4Fe-4S] cluster serves as cofactor.

The protein resides in the cytoplasm. The catalysed reaction is [[Fe-S] cluster scaffold protein carrying a second [4Fe-4S](2+) cluster] + N(6)-octanoyl-L-lysyl-[protein] + 2 oxidized [2Fe-2S]-[ferredoxin] + 2 S-adenosyl-L-methionine + 4 H(+) = [[Fe-S] cluster scaffold protein] + N(6)-[(R)-dihydrolipoyl]-L-lysyl-[protein] + 4 Fe(3+) + 2 hydrogen sulfide + 2 5'-deoxyadenosine + 2 L-methionine + 2 reduced [2Fe-2S]-[ferredoxin]. It participates in protein modification; protein lipoylation via endogenous pathway; protein N(6)-(lipoyl)lysine from octanoyl-[acyl-carrier-protein]: step 2/2. Its function is as follows. Catalyzes the radical-mediated insertion of two sulfur atoms into the C-6 and C-8 positions of the octanoyl moiety bound to the lipoyl domains of lipoate-dependent enzymes, thereby converting the octanoylated domains into lipoylated derivatives. This is Lipoyl synthase from Mycolicibacterium smegmatis (strain ATCC 700084 / mc(2)155) (Mycobacterium smegmatis).